We begin with the raw amino-acid sequence, 83 residues long: Cytotoxin homolog 5 (83 aa).

The signal sequence occupies residues 1–21 (MKTLLLTMVVVTIVCLDLGYT). 4 disulfides stabilise this stretch: C24–C43, C36–C61, C65–C76, and C77–C82.

This sequence belongs to the three-finger toxin family. Short-chain subfamily. Orphan group XV sub-subfamily. Expressed by the venom gland.

Its subcellular location is the secreted. The protein localises to the target cell membrane. Functionally, has low cytotoxic activity. This chain is Cytotoxin homolog 5, found in Naja atra (Chinese cobra).